The sequence spans 343 residues: MASALTVKDPTVSERTVVVSGLPVGLSKDQLVKRYFRDEGGHVEKVIYPPRSKGVAYIIFKEKKVAQTIIRQKKHSLGSEPLLTVSHFSEKVFNYVMAILDLSVFRPQIVLESLVVDLKKKIPTLNFSPLGRSGKISVQGSFLAILKLKQALISKAISALENNRKYAGERRNWTGQNPRRVLQKNENSAPTLGTSVPEPAGSPETLVLDTDVFLYLKHKCQFYEPTLSKYHVLCQERVDGDITTLCLQDARDGSYPGSVRHVKELIEEWAQEFYLELRKELLVLEGRRESEKRNMRQAFEQLCCRYPRVLMNVHRTHIDLIGPPSDTSLFKTQLMKSAGQKVT.

One can recognise an RRM domain in the interval 15 to 90; sequence RTVVVSGLPV…PLLTVSHFSE (76 aa). Residues 170–200 form a disordered region; sequence RRNWTGQNPRRVLQKNENSAPTLGTSVPEPA. Positions 184-194 are enriched in polar residues; sequence KNENSAPTLGT.

This chain is RNA-binding protein 43 (Rbm43), found in Rattus norvegicus (Rat).